Consider the following 155-residue polypeptide: RNA pyrophosphohydrolase (155 aa).

Residues 6–148 (GYRANVAIVL…KQDVYRRALT (143 aa)) enclose the Nudix hydrolase domain. The short motif at 38 to 59 (GGVATGETPLQAMYRELYEEVG) is the Nudix box element.

Belongs to the Nudix hydrolase family. RppH subfamily. A divalent metal cation serves as cofactor.

Its function is as follows. Accelerates the degradation of transcripts by removing pyrophosphate from the 5'-end of triphosphorylated RNA, leading to a more labile monophosphorylated state that can stimulate subsequent ribonuclease cleavage. In Francisella philomiragia subsp. philomiragia (strain ATCC 25017 / CCUG 19701 / FSC 153 / O#319-036), this protein is RNA pyrophosphohydrolase.